Reading from the N-terminus, the 151-residue chain is UPF0208 membrane protein KPN78578_26420 (151 aa).

2 helical membrane-spanning segments follow: residues 46–65 and 69–91; these read YAIR…QIAL and LGPA…WWLG.

Belongs to the UPF0208 family.

The protein localises to the cell inner membrane. This Klebsiella pneumoniae subsp. pneumoniae (strain ATCC 700721 / MGH 78578) protein is UPF0208 membrane protein KPN78578_26420.